Here is a 495-residue protein sequence, read N- to C-terminus: Carotenoid 3,4-desaturase (495 aa).

It belongs to the carotenoid/retinoid oxidoreductase family.

It catalyses the reaction dihydroisopentenyldehydrorhodopin + A = isopentenyldehydrorhodopin + AH2. The enzyme catalyses dihydrobisanhydrobacterioruberin + A = bisanhydrobacterioruberin + AH2. It participates in carotenoid biosynthesis. Involved in the biosynthesis of the acyclic C50 carotenoid bacterioruberin (BR). CrtD is involved in the desaturation reactions that form double bonds at C-3,4 of dihydroisopentenyldehydrorhodopin (DH-IDR) and C-3',4' of dihydrobisanhydrobacterioruberin (DH-BABR) to yield isopentenyld ehydrorhodopin (IDR) and bisanhydrobacterioruberin (BABR), respectively. This Haloarcula japonica (strain ATCC 49778 / DSM 6131 / JCM 7785 / NBRC 101032 / NCIMB 13157 / TR-1) protein is Carotenoid 3,4-desaturase.